A 120-amino-acid chain; its full sequence is Ribosome-binding factor A (120 aa).

Belongs to the RbfA family. In terms of assembly, monomer. Binds 30S ribosomal subunits, but not 50S ribosomal subunits or 70S ribosomes.

It localises to the cytoplasm. Its function is as follows. One of several proteins that assist in the late maturation steps of the functional core of the 30S ribosomal subunit. Associates with free 30S ribosomal subunits (but not with 30S subunits that are part of 70S ribosomes or polysomes). Required for efficient processing of 16S rRNA. May interact with the 5'-terminal helix region of 16S rRNA. The chain is Ribosome-binding factor A from Desulforamulus reducens (strain ATCC BAA-1160 / DSM 100696 / MI-1) (Desulfotomaculum reducens).